The chain runs to 462 residues: Glycine--tRNA ligase (462 aa).

Substrate is bound by residues Arg98 and Glu174. ATP is bound by residues 206–208, 216–221, 290–291, and 334–337; these read RNE, FRTREF, EL, and GADR. Substrate is bound at residue 221-225; the sequence is FEQME. Residue 330-334 coordinates substrate; sequence EPSLG.

The protein belongs to the class-II aminoacyl-tRNA synthetase family. In terms of assembly, homodimer.

It is found in the cytoplasm. The catalysed reaction is tRNA(Gly) + glycine + ATP = glycyl-tRNA(Gly) + AMP + diphosphate. In terms of biological role, catalyzes the attachment of glycine to tRNA(Gly). The polypeptide is Glycine--tRNA ligase (Lachnoclostridium phytofermentans (strain ATCC 700394 / DSM 18823 / ISDg) (Clostridium phytofermentans)).